The following is a 474-amino-acid chain: Glutamate--tRNA ligase 2 (474 aa).

The 'HIGH' region motif lies at 16-26; the sequence is PSPTGFLHIGG. The short motif at 245 to 249 is the 'KMSKS' region element; that stretch reads KLSKR. Lys-248 contacts ATP.

The protein belongs to the class-I aminoacyl-tRNA synthetase family. Glutamate--tRNA ligase type 1 subfamily. Monomer.

The protein resides in the cytoplasm. It carries out the reaction tRNA(Glu) + L-glutamate + ATP = L-glutamyl-tRNA(Glu) + AMP + diphosphate. Catalyzes the attachment of glutamate to tRNA(Glu) in a two-step reaction: glutamate is first activated by ATP to form Glu-AMP and then transferred to the acceptor end of tRNA(Glu). The sequence is that of Glutamate--tRNA ligase 2 from Rhizorhabdus wittichii (strain DSM 6014 / CCUG 31198 / JCM 15750 / NBRC 105917 / EY 4224 / RW1) (Sphingomonas wittichii).